We begin with the raw amino-acid sequence, 529 residues long: Peptide chain release factor 3 (529 aa).

The tr-type G domain occupies 11 to 280; it reads ARRRTFAIIS…GLVEWAPSPM (270 aa). GTP-binding positions include 20-27, 88-92, and 142-145; these read SHPDAGKT, DTPGH, and NKLD.

It belongs to the TRAFAC class translation factor GTPase superfamily. Classic translation factor GTPase family. PrfC subfamily.

It is found in the cytoplasm. In terms of biological role, increases the formation of ribosomal termination complexes and stimulates activities of RF-1 and RF-2. It binds guanine nucleotides and has strong preference for UGA stop codons. It may interact directly with the ribosome. The stimulation of RF-1 and RF-2 is significantly reduced by GTP and GDP, but not by GMP. The sequence is that of Peptide chain release factor 3 from Erwinia tasmaniensis (strain DSM 17950 / CFBP 7177 / CIP 109463 / NCPPB 4357 / Et1/99).